A 336-amino-acid polypeptide reads, in one-letter code: Meiotically up-regulated gene 33 protein (336 aa).

Residues 232–336 (ISEDDGLKRG…KPSRFSWGRS (105 aa)) are disordered. A compositionally biased stretch (polar residues) spans 250-262 (TFSNDSRSLSSYA).

It localises to the cytoplasm. Its function is as follows. Has a role in meiosis. The protein is Meiotically up-regulated gene 33 protein (mug33) of Schizosaccharomyces pombe (strain 972 / ATCC 24843) (Fission yeast).